The primary structure comprises 267 residues: Cell division protein FtsQ (267 aa).

At methionine 1–alanine 32 the chain is on the cytoplasmic side. Residues isoleucine 33–phenylalanine 53 traverse the membrane as a helical segment. The Periplasmic portion of the chain corresponds to threonine 54–tyrosine 267. A POTRA domain is found at phenylalanine 73–arginine 141.

Belongs to the FtsQ/DivIB family. FtsQ subfamily.

The protein resides in the cell inner membrane. In terms of biological role, essential cell division protein. This is Cell division protein FtsQ from Rickettsia prowazekii (strain Madrid E).